Here is a 354-residue protein sequence, read N- to C-terminus: Photosystem II protein D1 (354 aa).

Thr-2 is modified (N-acetylthreonine). A Phosphothreonine modification is found at Thr-2. 3 helical membrane passes run 29 to 46, 118 to 133, and 142 to 156; these read YIGWFGVLMIPTLLTATS, HFLLGVACYMGREWEL, and WIAVAYSAPVAAATA. Chlorophyll a is bound at residue His-118. A pheophytin a-binding site is contributed by Tyr-126. [CaMn4O5] cluster contacts are provided by Asp-170 and Glu-189. A helical membrane pass occupies residues 197 to 218; sequence FHMLGVAGVFGGSLFSAMHGSL. A chlorophyll a-binding site is contributed by His-198. Residues His-215 and 264–265 contribute to the a quinone site; that span reads SF. A Fe cation-binding site is contributed by His-215. His-272 provides a ligand contact to Fe cation. The chain crosses the membrane as a helical span at residues 274-288; sequence FLAAWPVVGIWFTAL. [CaMn4O5] cluster is bound by residues His-332, Glu-333, Asp-342, and Ala-344. The propeptide occupies 345 to 354; it reads ASIEAPSLNG.

Belongs to the reaction center PufL/M/PsbA/D family. In terms of assembly, PSII is composed of 1 copy each of membrane proteins PsbA, PsbB, PsbC, PsbD, PsbE, PsbF, PsbH, PsbI, PsbJ, PsbK, PsbL, PsbM, PsbT, PsbX, PsbY, PsbZ, Psb30/Ycf12, at least 3 peripheral proteins of the oxygen-evolving complex and a large number of cofactors. It forms dimeric complexes. The cofactor is The D1/D2 heterodimer binds P680, chlorophylls that are the primary electron donor of PSII, and subsequent electron acceptors. It shares a non-heme iron and each subunit binds pheophytin, quinone, additional chlorophylls, carotenoids and lipids. D1 provides most of the ligands for the Mn4-Ca-O5 cluster of the oxygen-evolving complex (OEC). There is also a Cl(-1) ion associated with D1 and D2, which is required for oxygen evolution. The PSII complex binds additional chlorophylls, carotenoids and specific lipids.. Tyr-161 forms a radical intermediate that is referred to as redox-active TyrZ, YZ or Y-Z. In terms of processing, C-terminally processed by CTPA; processing is essential to allow assembly of the oxygen-evolving complex and thus photosynthetic growth.

Its subcellular location is the plastid. The protein resides in the chloroplast thylakoid membrane. It carries out the reaction 2 a plastoquinone + 4 hnu + 2 H2O = 2 a plastoquinol + O2. Functionally, photosystem II (PSII) is a light-driven water:plastoquinone oxidoreductase that uses light energy to abstract electrons from H(2)O, generating O(2) and a proton gradient subsequently used for ATP formation. It consists of a core antenna complex that captures photons, and an electron transfer chain that converts photonic excitation into a charge separation. The D1/D2 (PsbA/PsbD) reaction center heterodimer binds P680, the primary electron donor of PSII as well as several subsequent electron acceptors. This chain is Photosystem II protein D1, found in Selaginella uncinata (Blue spike-moss).